Reading from the N-terminus, the 249-residue chain is Adenosylcobinamide-GDP ribazoletransferase (249 aa).

The next 7 helical transmembrane spans lie at 29-49 (LYWF…CAWL), 50-70 (PLSI…GFIV), 104-124 (VGSF…VAIL), 131-151 (AFAL…LLAA), 165-185 (GFVG…SLMM), 194-214 (PFLL…IGFL), and 226-246 (VLGA…GVAF).

Belongs to the CobS family. Mg(2+) serves as cofactor.

The protein resides in the cell inner membrane. The catalysed reaction is alpha-ribazole + adenosylcob(III)inamide-GDP = adenosylcob(III)alamin + GMP + H(+). It catalyses the reaction alpha-ribazole 5'-phosphate + adenosylcob(III)inamide-GDP = adenosylcob(III)alamin 5'-phosphate + GMP + H(+). It participates in cofactor biosynthesis; adenosylcobalamin biosynthesis; adenosylcobalamin from cob(II)yrinate a,c-diamide: step 7/7. Joins adenosylcobinamide-GDP and alpha-ribazole to generate adenosylcobalamin (Ado-cobalamin). Also synthesizes adenosylcobalamin 5'-phosphate from adenosylcobinamide-GDP and alpha-ribazole 5'-phosphate. In Chlorobium phaeovibrioides (strain DSM 265 / 1930) (Prosthecochloris vibrioformis (strain DSM 265)), this protein is Adenosylcobinamide-GDP ribazoletransferase.